A 103-amino-acid polypeptide reads, in one-letter code: Small ribosomal subunit protein uS10 (103 aa).

Belongs to the universal ribosomal protein uS10 family. Part of the 30S ribosomal subunit.

Its function is as follows. Involved in the binding of tRNA to the ribosomes. In Magnetococcus marinus (strain ATCC BAA-1437 / JCM 17883 / MC-1), this protein is Small ribosomal subunit protein uS10.